Reading from the N-terminus, the 379-residue chain is Armadillo repeat-containing X-linked protein 3 (379 aa).

Over 1 to 6 (MGYARK) the chain is Mitochondrial intermembrane. 2 mitochondrion outer membrane (MOM)-targeting sequence regions span residues 1–6 (MGYARK) and 26–37 (RLTRGRKQNKEK). Residues 7–29 (VGWVTAGLVIGAGACYCIYRLTR) traverse the membrane as a helical; Signal-anchor segment. Residues 30 to 379 (GRKQNKEKMA…TERMFPKSQE (350 aa)) lie on the Cytoplasmic side of the membrane. Residues 34–69 (NKEKMAEGGPGDVEDAGDCSGARYNDWSDDDDDSNE) form a disordered region. Phosphoserine is present on residues Ser-61, Ser-67, and Ser-72. The segment at 89 to 98 (RARARARARA) is nuclear localization signal. Ser-110 carries the post-translational modification Phosphoserine. ARM repeat units lie at residues 111–151 (PNSD…NNAA), 153–192 (AFNRDIIRDLGGLPIVAKILNTRDPIVKEKALIVLNNLSV), and 233–272 (VTNEYQHILANSISDFFRLFSAGNEETKLQVLKLLLNLAE).

Belongs to the eutherian X-chromosome-specific Armcx family. In terms of assembly, interacts (via ARM domain) with MIRO1, MIRO2 and TRAK2. The interaction with Miro is calcium-dependent. Interacts with Sox10.

It is found in the mitochondrion outer membrane. It localises to the cytoplasm. The protein resides in the nucleus. Functionally, regulates mitochondrial aggregation and transport in axons in living neurons. May link mitochondria to the Trak2-kinesin motor complex via its interaction with Miro and Trak2. Mitochondrial distribution and dynamics is regulated through Armcx3 protein degradation, which is promoted by PCK and negatively regulated by Wnt1. Enhances the Sox10-mediated transactivation of the neuronal acetylcholine receptor subunit alpha-3 and beta-4 subunit gene promoters. In Rattus norvegicus (Rat), this protein is Armadillo repeat-containing X-linked protein 3 (Armcx3).